Here is a 233-residue protein sequence, read N- to C-terminus: Ribosomal RNA large subunit methyltransferase E (233 aa).

5 residues coordinate S-adenosyl-L-methionine: glycine 80, tryptophan 82, aspartate 108, aspartate 124, and aspartate 148. Lysine 188 serves as the catalytic Proton acceptor.

Belongs to the class I-like SAM-binding methyltransferase superfamily. RNA methyltransferase RlmE family.

The protein localises to the cytoplasm. The enzyme catalyses uridine(2552) in 23S rRNA + S-adenosyl-L-methionine = 2'-O-methyluridine(2552) in 23S rRNA + S-adenosyl-L-homocysteine + H(+). Functionally, specifically methylates the uridine in position 2552 of 23S rRNA at the 2'-O position of the ribose in the fully assembled 50S ribosomal subunit. This is Ribosomal RNA large subunit methyltransferase E from Ruegeria pomeroyi (strain ATCC 700808 / DSM 15171 / DSS-3) (Silicibacter pomeroyi).